The sequence spans 365 residues: uncharacterized protein (365 aa).

3 disordered regions span residues Glu119–Ser157, Arg216–His298, and Ser313–Gly365. Residues Ser326 to Gln340 are compositionally biased toward basic and acidic residues.

This is an uncharacterized protein from Homo sapiens (Human).